The sequence spans 170 residues: Small ribosomal subunit protein uS5 (170 aa).

The S5 DRBM domain occupies 13 to 76 (LLEKLVGVRR…ENARKNMISV (64 aa)).

The protein belongs to the universal ribosomal protein uS5 family. In terms of assembly, part of the 30S ribosomal subunit. Contacts proteins S4 and S8.

Its function is as follows. With S4 and S12 plays an important role in translational accuracy. Located at the back of the 30S subunit body where it stabilizes the conformation of the head with respect to the body. The protein is Small ribosomal subunit protein uS5 of Nitrosococcus oceani (strain ATCC 19707 / BCRC 17464 / JCM 30415 / NCIMB 11848 / C-107).